Reading from the N-terminus, the 226-residue chain is Thiocyanate methyltransferase 1 (226 aa).

4 residues coordinate S-adenosyl-L-methionine: W35, W39, W46, and G73. S85 carries the post-translational modification Phosphoserine. S-adenosyl-L-methionine-binding positions include D94, 122–123 (DF), and Y138.

The protein belongs to the class I-like SAM-binding methyltransferase superfamily. TPMT family. Ubiquitous.

The enzyme catalyses thiocyanate + S-adenosyl-L-methionine = methyl thiocyanate + S-adenosyl-L-homocysteine. S-adenosyl-L-methionine-dependent methyltransferase. Probably involved in glucosinolate metabolism and defense against phytopathogens. Highly reactive to thiocyanate (NCS(-)) derived from myrosinase-mediated hydrolysis of glucosinolates upon tissue damage. Also accepts halid ions as substrates with a lower affinity. This is Thiocyanate methyltransferase 1 (TMT1) from Brassica oleracea (Wild cabbage).